Consider the following 147-residue polypeptide: Endothelial differentiation-related factor 1 homolog (147 aa).

Positions 1 to 69 (MAESDWDTVT…KLDRETEELH (69 aa)) are disordered. The span at 33-42 (RRGEEVETSK) shows a compositional bias: basic and acidic residues. The span at 46-58 (AGQNKQHTITRNT) shows a compositional bias: polar residues. Positions 59–69 (AKLDRETEELH) are enriched in basic and acidic residues. One can recognise an HTH cro/C1-type domain in the interval 81–135 (IQQGRQGKGMTQKDLATKINEKPQVIADYECGKAIPNNQVMGKIERVIGLKLRGK). Residues 92–111 (QKDLATKINEKPQVIADYEC) constitute a DNA-binding region (H-T-H motif).

It is found in the nucleus. Probable transcriptional coactivator. The protein is Endothelial differentiation-related factor 1 homolog (edf1) of Xenopus laevis (African clawed frog).